Reading from the N-terminus, the 276-residue chain is Sulfur carrier protein FdhD (276 aa).

The Cysteine persulfide intermediate role is filled by Cys-122. 259 to 264 (FCRRGR) serves as a coordination point for Mo-bis(molybdopterin guanine dinucleotide).

Belongs to the FdhD family.

The protein localises to the cytoplasm. Its function is as follows. Required for formate dehydrogenase (FDH) activity. Acts as a sulfur carrier protein that transfers sulfur from IscS to the molybdenum cofactor prior to its insertion into FDH. The chain is Sulfur carrier protein FdhD from Proteus mirabilis (strain HI4320).